The sequence spans 178 residues: Small ribosomal subunit protein uS5 (178 aa).

The region spanning 17 to 80 (FEERIVEIRR…AAARASVVEI (64 aa)) is the S5 DRBM domain.

This sequence belongs to the universal ribosomal protein uS5 family. In terms of assembly, part of the 30S ribosomal subunit. Contacts proteins S4 and S8.

With S4 and S12 plays an important role in translational accuracy. Functionally, located at the back of the 30S subunit body where it stabilizes the conformation of the head with respect to the body. This chain is Small ribosomal subunit protein uS5, found in Pseudothermotoga lettingae (strain ATCC BAA-301 / DSM 14385 / NBRC 107922 / TMO) (Thermotoga lettingae).